The following is a 239-amino-acid chain: Ribonuclease PH (239 aa).

Phosphate contacts are provided by residues arginine 86 and 124–126 (GTR).

This sequence belongs to the RNase PH family. As to quaternary structure, homohexameric ring arranged as a trimer of dimers.

It catalyses the reaction tRNA(n+1) + phosphate = tRNA(n) + a ribonucleoside 5'-diphosphate. Functionally, phosphorolytic 3'-5' exoribonuclease that plays an important role in tRNA 3'-end maturation. Removes nucleotide residues following the 3'-CCA terminus of tRNAs; can also add nucleotides to the ends of RNA molecules by using nucleoside diphosphates as substrates, but this may not be physiologically important. Probably plays a role in initiation of 16S rRNA degradation (leading to ribosome degradation) during starvation. In Marinomonas sp. (strain MWYL1), this protein is Ribonuclease PH.